We begin with the raw amino-acid sequence, 117 residues long: Large ribosomal subunit protein bL19 (117 aa).

It belongs to the bacterial ribosomal protein bL19 family.

Functionally, this protein is located at the 30S-50S ribosomal subunit interface and may play a role in the structure and function of the aminoacyl-tRNA binding site. This is Large ribosomal subunit protein bL19 from Vibrio campbellii (strain ATCC BAA-1116).